Here is a 116-residue protein sequence, read N- to C-terminus: Large ribosomal subunit protein bL19 (116 aa).

This sequence belongs to the bacterial ribosomal protein bL19 family.

Functionally, this protein is located at the 30S-50S ribosomal subunit interface and may play a role in the structure and function of the aminoacyl-tRNA binding site. The sequence is that of Large ribosomal subunit protein bL19 from Flavobacterium psychrophilum (strain ATCC 49511 / DSM 21280 / CIP 103535 / JIP02/86).